The chain runs to 901 residues: Nuclear factor of activated T-cells, cytoplasmic 4 (901 aa).

Residues 1-11 (MGAASCEDEEL) are compositionally biased toward acidic residues. Disordered stretches follow at residues 1 to 180 (MGAA…SSWS) and 203 to 361 (NEAA…TEDS). The span at 61–81 (IPRPPPPRPGMHSPPPRPAPS) shows a compositional bias: pro residues. Over residues 96–109 (GGPGGTAGGTGGGR) the composition is skewed to gly residues. A calcineurin-binding region spans residues 114–119 (PSIRIT). Over residues 114–123 (PSIRITSISP) the composition is skewed to low complexity. Gly residues predominate over residues 151 to 165 (GFGGYREAGGQGGGA). Residues 166–180 (FFSPSPGSSSLSSWS) show a composition bias toward low complexity. Ser168, Ser170, Ser213, and Ser217 each carry phosphoserine. Residues 213-229 (SPLPSPRASPRPWTPED) form an SP 1 repeat. The 2 approximate SP repeats stretch occupies residues 213-293 (SPLPSPRASP…LSRRGSLGEE (81 aa)). Composition is skewed to pro residues over residues 215–227 (LPSPRASPRPWTP) and 254–263 (GPIPASPRPA). The short motif at 268–270 (KRR) is the Nuclear localization signal element. Residues 272–288 (SSSGTPSSASPALSRRG) show a composition bias toward low complexity. The stretch at 277–293 (PSSASPALSRRGSLGEE) is one SP 2; approximate repeat. Phosphoserine occurs at positions 289, 334, and 344. Residues 401–582 (SALPPLDWPL…VPIECSQRSA (182 aa)) enclose the RHD domain. A DNA-binding region spans residues 430–437 (RAHYETEG). An IPT/TIG domain is found at 586–683 (PQVEAYSPSA…KRSPTQSFKF (98 aa)). Positions 672 to 674 (RRK) match the Nuclear localization signal motif. Lys689 is covalently cross-linked (Glycyl lysine isopeptide (Lys-Gly) (interchain with G-Cter in SUMO2)). Disordered regions lie at residues 697-721 (SLRGFPSTSGPPFGPDMDFSPPRPP) and 791-868 (QYGG…GFRD). Pro residues predominate over residues 805-822 (FSPPAPFRPPLPSSPPLE).

In terms of assembly, member of the multicomponent NFATC transcription complex that consists of at least two components, a pre-existing cytoplasmic component NFATC2 and an inducible nuclear component NFATC1. Other NFAT proteins, such as NFATC4, NFATC3, or members of the activating protein-1 (AP-1) family and MAF can also bind the complex. NFAT proteins can bind DNA as monomers or dimers. Component of a promoter-binding complex composed of STAT3, NFATC3 and NFATC4; complex formation is enhanced by calcineurin. Interacts with CREBBP; this interaction potentiates transcription activation. Interacts with MAPK8/JNK1 and MAPK9/JNK2. Interacts with GATA4 (via the second Zn finger). Interacts (via N-terminus) with IRAK1 (via C-terminus). Interacts with RPS6KA3. Interacts with HOMER1, HOMER2 and HOMER3; this interaction competes with calcineurin/PPP3CA-binding and hence prevents NFATC4 dephosphorylation and activation. Interacts with ESR1 and ESR2; this interaction decreases NFATC4 transcriptional activity. Interacts with MTOR and MAPK7/ERK5. Interacts with TRIM17; this interaction prevents NFATC3 nuclear localization. Interacts with TCF25 (via C-terminus); the interaction leads to suppression of NFATC4 transcription factor activity and is reduced following stimulation with angiotensin-2. Phosphorylated by NFATC-kinases; dephosphorylated by calcineurin/PPP3CA. Phosphorylated on Ser-168 and Ser-170 by MTOR, IRAK1, MAPK7/ERK5 and MAPK14/p38, on Ser-213 and Ser-217 by MAPK8 and MAPK9, and on Ser-289 and Ser-344 by RPS6KA3. Phosphorylated by GSK3B; this phosphorylation markedly increases NFATC4 ubiquitination. Phosphorylation by MAPK8/JNK1, MAPK9/JNK2 and RPS6KA3 may stimulate NFATC4 transcriptional activity. Phosphorylation at Ser-168 and Ser-170 is stimulated by UV irradiation. In terms of processing, ubiquitinated, leading to degradation by the proteasome. Ubiquitination may be stimulated by GSK3B-dependent phosphorylation. Polyubiquitin linkage mainly occurs through 'Lys-48'. Expressed in heart (at protein level).

Its subcellular location is the cytoplasm. The protein localises to the nucleus. In terms of biological role, ca(2+)-regulated transcription factor that is involved in several processes, including the development and function of the immune, cardiovascular, musculoskeletal, and nervous systems. Involved in T-cell activation, stimulating the transcription of cytokine genes, including that of IL2 and IL4. Along with NFATC3, involved in embryonic heart development. Following JAK/STAT signaling activation and as part of a complex with NFATC3 and STAT3, binds to the alpha-beta E4 promoter region of CRYAB and activates transcription in cardiomyocytes. Involved in mitochondrial energy metabolism required for cardiac morphogenesis and function. Transactivates many genes involved in heart physiology. Along with GATA4, binds to and activates NPPB/BNP promoter. Activates NPPA/ANP/ANF and MYH7/beta-MHC transcription. Binds to and transactivates AGTR2 gene promoter. Involved in the regulation of adult hippocampal neurogenesis. Involved in BDNF-driven pro-survival signaling in hippocampal adult-born neurons. Involved in the formation of long-term spatial memory and long-term potentiation. In cochlear nucleus neurons, may play a role in deafferentation-induced apoptosis during a developmental critical period when auditory neurons depend on afferent input for survival. Binds to and activates the BACE1/Beta-secretase 1 promoter, hence may regulate the proteolytic processing of the amyloid precursor protein (APP). Plays a role in adipocyte differentiation. May be involved in myoblast differentiation into myotubes. Binds the consensus DNA sequence 5'-GGAAAAT-3'. In the presence of CREBBP, activates TNF transcription. Binds to PPARG gene promoter and regulates its activity. Binds to PPARG and REG3G gene promoters. This chain is Nuclear factor of activated T-cells, cytoplasmic 4 (Nfatc4), found in Rattus norvegicus (Rat).